Reading from the N-terminus, the 716-residue chain is Mitochondrial Rho GTPase 1 (716 aa).

The Cytoplasmic portion of the chain corresponds to 1–692 (MSPDAIRVVV…VSVDQDDIKH (692 aa)). A Miro 1 domain is found at 3 to 224 (PDAIRVVVCG…FYLCQRAVTH (222 aa)). The segment at 58-99 (NDQDHHHHHQSSPSTMKNKRKHNNKRERERERESSINNVQPN) is disordered. Residues 84 to 91 (ERERERES), 113 to 115 (DTS), and 167 to 170 (NKSD) each bind GTP. The EF-hand 1 domain maps to 240–275 (GAIKPLKRIFWLSDTDQDGYLNFEELSELHKKCFGI). Residues Asp-253, Asp-255, Asp-257, Tyr-259, and Glu-264 each coordinate Ca(2+). The segment at 303–327 (TQTPPQQQHLATSAGTPNGTTTTTS) is disordered. The region spanning 388 to 423 (TGYKFFVDLFIKFDKDNDGGLNEDELNTLFRSTPGI) is the EF-hand 2 domain. The Ca(2+) site is built by Asp-401, Asp-403, Asp-405, and Glu-412. Residues 505-671 (RNVFNCFIVG…FIQLVDAAKT (167 aa)) enclose the Miro 2 domain. GTP is bound by residues 514–521 (GAPKAGKS), 550–554 (ELRGG), and 620–623 (LKAD). A helical; Anchor for type IV membrane protein transmembrane segment spans residues 693-713 (IIMTGAAIAVVGLVSIWVLNS). Residues 714–716 (LRR) lie on the Mitochondrial intermembrane side of the membrane.

The protein belongs to the mitochondrial Rho GTPase family.

It localises to the mitochondrion outer membrane. Mitochondrial GTPase involved in mitochondrial trafficking. Probably involved in control of anterograde transport of mitochondria and their subcellular distribution. The sequence is that of Mitochondrial Rho GTPase 1 (GEM1) from Candida albicans (strain SC5314 / ATCC MYA-2876) (Yeast).